The primary structure comprises 350 residues: Protein disulfide isomerase Creld2 (350 aa).

The N-terminal stretch at 1-22 (MHLLLAAAFGLLLLLPPPGAVA) is a signal peptide. A CXXC motif is present at residues 29-32 (CQRC). Cystine bridges form between cysteine 29/cysteine 32, cysteine 138/cysteine 152, cysteine 146/cysteine 164, and cysteine 166/cysteine 175. The region spanning 134-176 (DCQECQGGSERPCSGNGYCSGDGSRQGDGSCQCHTGYKGPLCI) is the EGF-like 1 domain. One copy of the FU 1 repeat lies at 191–238 (HSICSACDESCKTCSGPSNKDCIQCEVGWARVEDACVDVDECAAETSP). Asparagine 249 carries N-linked (GlcNAc...) asparagine glycosylation. The FU 2 repeat unit spans residues 251-298 (SYTCEDCDSTCVGCTGKGPANCKECIAGYTKESGQCTDIDECSLEEKA). The CXXC signature appears at 261–264 (CVGC). 4 disulfides stabilise this stretch: cysteine 261–cysteine 264, cysteine 292–cysteine 306, cysteine 299–cysteine 315, and cysteine 317–cysteine 328. The EGF-like 2; calcium-binding domain occupies 288-329 (DIDECSLEEKACKRKNENCYNVPGSFVCVCPEGFEETEDACV).

It belongs to the CRELD family. Interacts with CHRNA4. Component of a complex containing at least CRELD2, MANF, MATN3 and PDIA4. In terms of tissue distribution, expressed in chondrocytes (at protein level).

It localises to the endoplasmic reticulum. The enzyme catalyses Catalyzes the rearrangement of -S-S- bonds in proteins.. Its function is as follows. Protein disulfide isomerase. Might play a role in the unfolded protein response. May regulate transport of alpha4-beta2 neuronal acetylcholine receptor. The polypeptide is Protein disulfide isomerase Creld2 (Creld2) (Mus musculus (Mouse)).